We begin with the raw amino-acid sequence, 279 residues long: Putative hydro-lyase GDI0188/Gdia_2258 (279 aa).

This sequence belongs to the D-glutamate cyclase family.

This Gluconacetobacter diazotrophicus (strain ATCC 49037 / DSM 5601 / CCUG 37298 / CIP 103539 / LMG 7603 / PAl5) protein is Putative hydro-lyase GDI0188/Gdia_2258.